An 860-amino-acid chain; its full sequence is Leucine--tRNA ligase (860 aa).

The 'HIGH' region signature appears at 42 to 52; sequence PYPSGRLHMGH. The 'KMSKS' region motif lies at 619-623; sequence KMSKS. Residue Lys-622 coordinates ATP.

Belongs to the class-I aminoacyl-tRNA synthetase family.

The protein resides in the cytoplasm. The catalysed reaction is tRNA(Leu) + L-leucine + ATP = L-leucyl-tRNA(Leu) + AMP + diphosphate. The polypeptide is Leucine--tRNA ligase (Pasteurella multocida (strain Pm70)).